The primary structure comprises 148 residues: Snaclec 7 (148 aa).

The first 23 residues, M1–A23, serve as a signal peptide directing secretion. 3 cysteine pairs are disulfide-bonded: C27-C38, C55-C144, and C121-C136. Positions H34–K145 constitute a C-type lectin domain.

Belongs to the snaclec family. As to quaternary structure, heterodimer; disulfide-linked. Expressed by the venom gland.

It is found in the secreted. Interferes with one step of hemostasis (modulation of platelet aggregation, or coagulation cascade, for example). This is Snaclec 7 from Echis pyramidum leakeyi (Leakey's carpet viper).